The following is a 183-amino-acid chain: Ribosome-recycling factor (183 aa).

It belongs to the RRF family.

The protein localises to the cytoplasm. Responsible for the release of ribosomes from messenger RNA at the termination of protein biosynthesis. May increase the efficiency of translation by recycling ribosomes from one round of translation to another. The polypeptide is Ribosome-recycling factor (Deinococcus deserti (strain DSM 17065 / CIP 109153 / LMG 22923 / VCD115)).